A 487-amino-acid polypeptide reads, in one-letter code: NADH-quinone oxidoreductase subunit N (487 aa).

A run of 14 helical transmembrane segments spans residues 8-28 (LIAMLPLLIVGLTVVVVMLSI), 35-55 (FINATLTVIGLNLALLSLYFV), 78-98 (GLVIIASLATSTFAYPWLVGY), 104-124 (EFYLLVLIAALGGILLASANH), 125-145 (LASLFLGIELLTLPLFGLIGY), 159-179 (YMLLSAAASSFLLFGMALLYA), 203-223 (ILAGLGMMIVGLGFKLSLVPF), 235-255 (PAPVSTFLATASKIAIFAVVM), 271-291 (LVLSIIAVASILFGNLMAISQ), 297-317 (LLGYSSIAHLGYLLIALVAVQ), 328-348 (IGVYLAGYLFSSLGAFGVVSL), 376-396 (AVMTVMMLSLAGIPMTLGFIG), 409-428 (LWWLTGAVVLGSAIGLYYYL), and 451-471 (ALTAGGVVVLISAILVLVLGI).

The protein belongs to the complex I subunit 2 family. In terms of assembly, NDH-1 is composed of 13 different subunits. Subunits NuoA, H, J, K, L, M, N constitute the membrane sector of the complex.

The protein resides in the cell inner membrane. It carries out the reaction a quinone + NADH + 5 H(+)(in) = a quinol + NAD(+) + 4 H(+)(out). NDH-1 shuttles electrons from NADH, via FMN and iron-sulfur (Fe-S) centers, to quinones in the respiratory chain. The immediate electron acceptor for the enzyme in this species is believed to be ubiquinone. Couples the redox reaction to proton translocation (for every two electrons transferred, four hydrogen ions are translocated across the cytoplasmic membrane), and thus conserves the redox energy in a proton gradient. The protein is NADH-quinone oxidoreductase subunit N of Yersinia pseudotuberculosis serotype O:1b (strain IP 31758).